Here is a 312-residue protein sequence, read N- to C-terminus: MKFFCAFIFTALIFISLEKIGQSCCPNPIVDSEQLTIFQAVILGMVQGVTECIPVSSTAHLKIIPVALGWGDPGVAFTAVIQLGSIVSIVWYFWNDLTKITFGAYKSIITSDYQSPDLKMLVSIGLGTIPIVFFGLLIKVFIPDFDNSRLRSTVAIAIASIIMALLLVIAERIGSRKRNFEKLDIRDGIVIGLAQVLALIPGVSRSGSTITGGLFIGLERSTAARFSFLLGLPAITLAGLVELKTLLDEGFGSVGLVATLTGVFSAIIFSYIAISWLMRYLQTQDTWIFIWYRLAFGILILIGIISGVIENT.

A run of 7 helical transmembrane segments spans residues glycine 74–tryptophan 94, valine 122–isoleucine 142, valine 154–glycine 174, leucine 183–valine 203, phenylalanine 226–leucine 246, valine 254–isoleucine 274, and isoleucine 288–valine 308.

It belongs to the UppP family.

The protein resides in the cell inner membrane. It carries out the reaction di-trans,octa-cis-undecaprenyl diphosphate + H2O = di-trans,octa-cis-undecaprenyl phosphate + phosphate + H(+). Catalyzes the dephosphorylation of undecaprenyl diphosphate (UPP). Confers resistance to bacitracin. This Trichodesmium erythraeum (strain IMS101) protein is Undecaprenyl-diphosphatase.